Here is a 339-residue protein sequence, read N- to C-terminus: UDP-N-acetylenolpyruvoylglucosamine reductase (339 aa).

Positions 19–189 constitute an FAD-binding PCMH-type domain; it reads VDVQARLFAQ…LRVRFKLSRE (171 aa). Arg-166 is an active-site residue. Catalysis depends on Ser-239, which acts as the Proton donor. Residue Glu-335 is part of the active site.

This sequence belongs to the MurB family. FAD is required as a cofactor.

It localises to the cytoplasm. It carries out the reaction UDP-N-acetyl-alpha-D-muramate + NADP(+) = UDP-N-acetyl-3-O-(1-carboxyvinyl)-alpha-D-glucosamine + NADPH + H(+). It functions in the pathway cell wall biogenesis; peptidoglycan biosynthesis. In terms of biological role, cell wall formation. The sequence is that of UDP-N-acetylenolpyruvoylglucosamine reductase from Pseudomonas syringae pv. tomato (strain ATCC BAA-871 / DC3000).